Here is a 528-residue protein sequence, read N- to C-terminus: Putative pumilio homolog 10 (528 aa).

The region spanning 188–528 (EGSGASYPDE…KIFSKTILKK (341 aa)) is the PUM-HD domain. Pumilio repeat units follow at residues 213–248 (EIYG…VIFL), 249–284 (EIID…MIVS), 285–323 (VLTS…ALVK), 325–360 (ALEP…FVVE), 361–396 (AATE…RLVA), 397–433 (EISR…LPFR), 434–465 (THCI…EIVR), and 466–503 (ELLS…RLVE).

It is found in the cytoplasm. Functionally, sequence-specific RNA-binding protein that regulates translation and mRNA stability by binding the 3'-UTR of target mRNAs. This chain is Putative pumilio homolog 10 (APUM10), found in Arabidopsis thaliana (Mouse-ear cress).